A 364-amino-acid polypeptide reads, in one-letter code: Peroxisomal membrane protein PEX16 (364 aa).

Ser200 is subject to Phosphoserine.

This sequence belongs to the peroxin-16 family.

It localises to the peroxisome membrane. Functionally, involved in the biogenesis of peroxisomes. In Schizosaccharomyces pombe (strain 972 / ATCC 24843) (Fission yeast), this protein is Peroxisomal membrane protein PEX16 (pex16).